The following is a 471-amino-acid chain: Tryptophanase (471 aa).

N6-acetyllysine is present on residues K5, K115, and K156. An N6-(pyridoxal phosphate)lysine modification is found at K270. K450 carries the post-translational modification N6-acetyllysine.

Belongs to the beta-eliminating lyase family. Homotetramer. Pyridoxal 5'-phosphate is required as a cofactor.

It carries out the reaction L-tryptophan + H2O = indole + pyruvate + NH4(+). Its pathway is amino-acid degradation; L-tryptophan degradation via pyruvate pathway; indole and pyruvate from L-tryptophan: step 1/1. This is Tryptophanase from Escherichia coli O139:H28 (strain E24377A / ETEC).